A 501-amino-acid polypeptide reads, in one-letter code: Dipeptide and tripeptide permease A (501 aa).

The Cytoplasmic portion of the chain corresponds to 1-34 (MSTANNNQPESISMNAFKQPKAFYLIFSIELWER). A helical membrane pass occupies residues 35–55 (FGYYGLQGIMAVYLVKMLGMS). The Periplasmic segment spans residues 56–59 (EADS). A helical transmembrane segment spans residues 60–80 (ITLFSSFSALVYGFVAIGGWL). The Cytoplasmic portion of the chain corresponds to 81 to 89 (GDKVLGAKR). The next 2 membrane-spanning stretches (helical) occupy residues 90–110 (VIVLGALTLAVGYSMIAYSGH) and 111–131 (EIFWVYLGMATIAVGNGLFKA). Over 132-153 (NPSSLLSTCYSKDDPRLDGAFT) the chain is Periplasmic. A helical transmembrane segment spans residues 154 to 174 (MYYMSINIGSFFSMLATPWLA). The Cytoplasmic segment spans residues 175–178 (AKYG). A helical transmembrane segment spans residues 179 to 199 (WSVAFSLSVVGMLITLVNFWF). The Periplasmic segment spans residues 200 to 220 (CRKWVKNQGSKPDFLPLQFKK). The chain crosses the membrane as a helical span at residues 221 to 241 (LLMVLVGIIALITLSNWLLHN). The Cytoplasmic portion of the chain corresponds to 242–246 (QIIAR). Residues 247-267 (WALALVSLGIIFIFTKETLFL) traverse the membrane as a helical segment. Residues 268–274 (QGIARRR) lie on the Periplasmic side of the membrane. The chain crosses the membrane as a helical span at residues 275-295 (MIVAFLLMLEAVIFFVLYSQM). Residues 296-320 (PTSLNFFAIHNVEHSIFGIGFEPEQ) are Cytoplasmic-facing. A helical transmembrane segment spans residues 321-341 (FQALNPFWIMLASPILAAIYN). At 342-352 (KMGDRLPMPHK) the chain is on the periplasmic side. Residues 353-373 (FAFGMMLCSAAFLVLPWGASF) traverse the membrane as a helical segment. The Cytoplasmic portion of the chain corresponds to 374–383 (ANEHGIVSVN). A helical transmembrane segment spans residues 384-404 (WLILSYALQSIGELMISGLGL). The Periplasmic segment spans residues 405-414 (AMVAQLVPQR). A helical membrane pass occupies residues 415–435 (LMGFIMGSWFLTTAAAALIAG). At 436–460 (KVAALTAVPSDAITDAHASLAIYSH) the chain is on the cytoplasmic side. Residues 461–481 (VFMQIGIVTAIIAVLMMLTAP) traverse the membrane as a helical segment. At 482–501 (KLYRMTLAPSDHNDVKIMTQ) the chain is on the periplasmic side.

This sequence belongs to the major facilitator superfamily. Proton-dependent oligopeptide transporter (POT/PTR) (TC 2.A.17) family. DtpA subfamily.

The protein resides in the cell inner membrane. Functionally, proton-dependent permease that transports di- and tripeptides. The sequence is that of Dipeptide and tripeptide permease A from Yersinia pestis.